Reading from the N-terminus, the 128-residue chain is Large ribosomal subunit protein bL12 (128 aa).

This sequence belongs to the bacterial ribosomal protein bL12 family. Homodimer. Part of the ribosomal stalk of the 50S ribosomal subunit. Forms a multimeric L10(L12)X complex, where L10 forms an elongated spine to which 2 to 4 L12 dimers bind in a sequential fashion. Binds GTP-bound translation factors.

In terms of biological role, forms part of the ribosomal stalk which helps the ribosome interact with GTP-bound translation factors. Is thus essential for accurate translation. The sequence is that of Large ribosomal subunit protein bL12 from Synechocystis sp. (strain ATCC 27184 / PCC 6803 / Kazusa).